The primary structure comprises 377 residues: tRNA-specific 2-thiouridylase MnmA (377 aa).

ATP-binding positions include 9–16 (AMSGGVDS) and L35. C105 functions as the Nucleophile in the catalytic mechanism. The cysteines at positions 105 and 201 are disulfide-linked. ATP is bound at residue G129. Residues 151–153 (KNQ) form an interaction with tRNA region. C201 acts as the Cysteine persulfide intermediate in catalysis. Positions 307–308 (RY) are interaction with tRNA.

Belongs to the MnmA/TRMU family.

The protein resides in the cytoplasm. It carries out the reaction S-sulfanyl-L-cysteinyl-[protein] + uridine(34) in tRNA + AH2 + ATP = 2-thiouridine(34) in tRNA + L-cysteinyl-[protein] + A + AMP + diphosphate + H(+). In terms of biological role, catalyzes the 2-thiolation of uridine at the wobble position (U34) of tRNA, leading to the formation of s(2)U34. The chain is tRNA-specific 2-thiouridylase MnmA from Leptospira borgpetersenii serovar Hardjo-bovis (strain JB197).